The chain runs to 422 residues: Glutamate-1-semialdehyde 2,1-aminomutase (422 aa).

Lysine 258 carries the N6-(pyridoxal phosphate)lysine modification.

Belongs to the class-III pyridoxal-phosphate-dependent aminotransferase family. HemL subfamily. In terms of assembly, homodimer. It depends on pyridoxal 5'-phosphate as a cofactor.

The protein localises to the cytoplasm. It carries out the reaction (S)-4-amino-5-oxopentanoate = 5-aminolevulinate. Its pathway is porphyrin-containing compound metabolism; protoporphyrin-IX biosynthesis; 5-aminolevulinate from L-glutamyl-tRNA(Glu): step 2/2. In Chlamydia muridarum (strain MoPn / Nigg), this protein is Glutamate-1-semialdehyde 2,1-aminomutase.